The following is a 362-amino-acid chain: Peptide chain release factor 1 (362 aa).

Glutamine 237 is modified (N5-methylglutamine). The segment at 289–308 (AAEISDTRRNLLGSGDRSDR) is disordered.

The protein belongs to the prokaryotic/mitochondrial release factor family. Methylated by PrmC. Methylation increases the termination efficiency of RF1.

It localises to the cytoplasm. Peptide chain release factor 1 directs the termination of translation in response to the peptide chain termination codons UAG and UAA. The polypeptide is Peptide chain release factor 1 (Vibrio cholerae serotype O1 (strain ATCC 39541 / Classical Ogawa 395 / O395)).